The sequence spans 550 residues: Thioredoxin domain-containing protein 2 (550 aa).

The disordered stretch occupies residues 1–50 (MFKKNQKLSKDKGLEVNSVQAGAPEESDVKLNNGGKANERGSNEFLDTAQ). Phosphoserine is present on residues serine 42 and serine 51. Residues 63–428 (MLHMSTEESE…IKSSEDVQPS (366 aa)) are disordered. Polar residues-rich tracts occupy residues 73–87 (PPQQVSSTSMFSENT), 96–105 (PKSSTKNTQL), and 112–140 (KTSSYSKQTNSSNIPKSLAITTYPKQGST). Repeat copies occupy residues 104–118 (QLKQEDISKTSSYSK), 119–133 (QTNSSNIPKSLAITT), 134–148 (YPKQGSTLKPAANGT), 149–163 (HDREAEKPKSSEDLI), 164–178 (QSKKGDIFKPSEDSI), 179–193 (QSKKGDMPKSSEDPI), 194–208 (QSKKDDTAKSLEDTI), 209–223 (QSKNGDMPKSSEDPI), 224–238 (QSKKDDTARSLEDSI), 239–252 (QSKKGDMPKSSDTI), 253–267 (QSKESETPKFLQDTI), 268–282 (QSKGGKINKQVKDSM), 283–297 (KSKESKIRKPLKDSI), 298–312 (QSKENKIPKSSQDSA), 313–327 (QPKEGKIHKPLKDSL), 328–342 (PSKEGDISKPSEDTI), 343–357 (QAKEEITVSPEDTIQ), 358–384 (AKEEITMSPEDTIQAKEEITVSPEDTI), 385–399 (QAKEEITVSPEDTMQ), 400–412 (SKEEITVSPEDTV), 413–425 (QSQEGDIKSSEDV), and 426–440 (QPSENEIFPFEAEIE). Positions 104-440 (QLKQEDISKT…EIFPFEAEIE (337 aa)) are 22 X 15 AA approximate tandem repeat of Q-P-K-X-G-D-I-P-K-S-[PS]-E-[KE]-X-I. Composition is skewed to basic and acidic residues over residues 148–205 (THDR…KSLE), 217–259 (KSSE…ESET), 277–304 (QVKDSMKSKESKIRKPLKDSIQSKENKI), and 313–348 (QPKEGKIHKPLKDSLPSKEGDISKPSEDTIQAKEEI). At serine 158 the chain carries Phosphoserine. Residues serine 351 and serine 379 each carry the phosphoserine modification. In terms of domain architecture, Thioredoxin spans 401–550 (KEEITVSPED…KLEKSIAELK (150 aa)). At serine 407 the chain carries Phosphoserine. Cysteine 477 and cysteine 480 form a disulfide bridge.

In terms of tissue distribution, testis-specific. Strongly expressed in the testicular seminiferous tubules, mostly in the round spermatids.

It localises to the cytoplasm. Its function is as follows. Probably plays a regulatory role in sperm development. May participate in regulation of fibrous sheath (FS) assembly by supporting the formation of disulfide bonds during sperm tail morphogenesis. May also be required to rectify incorrect disulfide pairing and generate suitable pairs between the FS constituents. Can reduce disulfide bonds in vitro in the presence of NADP and thioredoxin reductase. This Rattus norvegicus (Rat) protein is Thioredoxin domain-containing protein 2 (Txndc2).